The chain runs to 413 residues: Ras association domain-containing protein 5 (413 aa).

The disordered stretch occupies residues 1–105 (MASPAIGQRP…RDVRSIFEQP (105 aa)). Positions 61-74 (ARGDPEPTPRDCRH) are enriched in basic and acidic residues. A Phorbol-ester/DAG-type zinc finger spans residues 117-165 (GHRFAELALRGGPGWCDLCGREVLRQALRCANCKFTCHPECRSLIQLDC). Ser-177 and Ser-274 each carry phosphoserine. The Ras-associating domain occupies 265–359 (PAATTDKRTS…LSFVLKENET (95 aa)). Position 347 is a phosphothreonine (Thr-347). Positions 361-408 (DVEWDAFSIPELQNFLTILEKEEQDKIHQLQKKYNKFRQKLEEALRES) constitute an SARAH domain.

In terms of assembly, interacts directly with activated HRAS; a RASSF5-STK4/MST1 complex probably associates with activated HRAS. Interacts with KRAS. Probably interacts with Ras-like GTPases RRAS, MRAS, RAP1B, RAP2A and RALA. Interacts with RRAS2. Can self-associate. Interacts with RSSF1 isoform A. The RSSF1 isoform A-RSSF5 heterodimer probably mediates the association of RSSF1 with HRAS. Isoform 2 interacts with activated RAP1A and ITGAL/LFA-1. Binds STK4/MST1, inhibiting STK4/MST1 autoactivation.

The protein resides in the cytoplasm. It localises to the cytoskeleton. Its function is as follows. Potential tumor suppressor. Seems to be involved in lymphocyte adhesion by linking RAP1A activation upon T-cell receptor or chemokine stimulation to integrin activation. Stimulates lymphocyte polarization and the patch-like distribution of ITGAL/LFA-1, resulting in an enhanced adhesion to ICAM1. Together with RAP1A may participate in regulation of microtubule growth. The association with activated RAP1A is required for directional movement of endothelial cells during wound healing. May be involved in regulation of Ras apoptotic function. The RASSF5-STK4/MST1 complex may mediate HRAS and KRAS induced apoptosis. This is Ras association domain-containing protein 5 (Rassf5) from Rattus norvegicus (Rat).